A 479-amino-acid polypeptide reads, in one-letter code: Ribosomal RNA small subunit methyltransferase F (479 aa).

S-adenosyl-L-methionine-binding positions include 125–131, Glu149, Asp176, and Asp194; that span reads AAAPGSK. Cys247 serves as the catalytic Nucleophile.

The protein belongs to the class I-like SAM-binding methyltransferase superfamily. RsmB/NOP family.

It is found in the cytoplasm. The catalysed reaction is cytidine(1407) in 16S rRNA + S-adenosyl-L-methionine = 5-methylcytidine(1407) in 16S rRNA + S-adenosyl-L-homocysteine + H(+). Functionally, specifically methylates the cytosine at position 1407 (m5C1407) of 16S rRNA. This is Ribosomal RNA small subunit methyltransferase F from Salmonella paratyphi C (strain RKS4594).